We begin with the raw amino-acid sequence, 262 residues long: Orotidine 5'-phosphate decarboxylase (262 aa).

Substrate-binding positions include aspartate 35, 57 to 59 (KTH), 89 to 98 (DRKFADIGNT), tyrosine 215, and arginine 233. Lysine 91 functions as the Proton donor in the catalytic mechanism.

This sequence belongs to the OMP decarboxylase family.

The enzyme catalyses orotidine 5'-phosphate + H(+) = UMP + CO2. It participates in pyrimidine metabolism; UMP biosynthesis via de novo pathway; UMP from orotate: step 2/2. This chain is Orotidine 5'-phosphate decarboxylase (URA3), found in Pichia kudriavzevii (Yeast).